A 331-amino-acid polypeptide reads, in one-letter code: Glutamyl-Q tRNA(Asp) synthetase (331 aa).

The segment covering 1–30 (MVQQAVIQRSANQQLSNQRSANQRATNQPT) has biased composition (polar residues). The segment at 1-36 (MVQQAVIQRSANQQLSNQRSANQRATNQPTEYVGRF) is disordered. Residues 35-39 (RFAPS) and Glu-71 each bind L-glutamate. A 'HIGH' region motif is present at residues 38 to 48 (PSPSGDLHFGS). Zn(2+) is bound by residues Cys-127, Cys-129, Tyr-141, and Cys-145. The L-glutamate site is built by Tyr-198 and Arg-216. A 'KMSKS' region motif is present at residues 254–258 (KLSKQ). Lys-257 contributes to the ATP binding site.

This sequence belongs to the class-I aminoacyl-tRNA synthetase family. GluQ subfamily. Requires Zn(2+) as cofactor.

Functionally, catalyzes the tRNA-independent activation of glutamate in presence of ATP and the subsequent transfer of glutamate onto a tRNA(Asp). Glutamate is transferred on the 2-amino-5-(4,5-dihydroxy-2-cyclopenten-1-yl) moiety of the queuosine in the wobble position of the QUC anticodon. The polypeptide is Glutamyl-Q tRNA(Asp) synthetase (Yersinia pseudotuberculosis serotype I (strain IP32953)).